The primary structure comprises 192 residues: Xanthine phosphoribosyltransferase (192 aa).

Positions 20 and 27 each coordinate xanthine. Residue 128-132 coordinates 5-phospho-alpha-D-ribose 1-diphosphate; the sequence is ANGQA. A xanthine-binding site is contributed by Lys-156.

This sequence belongs to the purine/pyrimidine phosphoribosyltransferase family. Xpt subfamily. In terms of assembly, homodimer.

It localises to the cytoplasm. The catalysed reaction is XMP + diphosphate = xanthine + 5-phospho-alpha-D-ribose 1-diphosphate. Its pathway is purine metabolism; XMP biosynthesis via salvage pathway; XMP from xanthine: step 1/1. Converts the preformed base xanthine, a product of nucleic acid breakdown, to xanthosine 5'-monophosphate (XMP), so it can be reused for RNA or DNA synthesis. This is Xanthine phosphoribosyltransferase from Listeria monocytogenes serotype 4b (strain CLIP80459).